Reading from the N-terminus, the 573-residue chain is 60 kDa lysophospholipase (573 aa).

Residues 9–355 (RRLLAVYTGG…DVRKELLTKD (347 aa)) enclose the Asparaginase/glutaminase domain. The active-site Acyl-ester intermediate is Thr-19. The tract at residues 41-350 (TLPMFHDEEH…PGLSLDVRKE (310 aa)) is asparaginase. Substrate is bound by residues 84–86 (DSS) and 116–117 (TD). ANK repeat units lie at residues 141 to 170 (GAQV…YVIP), 399 to 429 (ALVP…DLGL), 433 to 462 (NGQT…DVNT), 466 to 495 (DGFS…SLST), and 533 to 562 (DGHS…AVGA).

In the N-terminal section; belongs to the asparaginase 1 family. Monomer.

The catalysed reaction is a 1-acyl-sn-glycero-3-phosphocholine + H2O = sn-glycerol 3-phosphocholine + a fatty acid + H(+). The enzyme catalyses L-asparagine + H2O = L-aspartate + NH4(+). It catalyses the reaction a 1-O-alkyl-2-acetyl-sn-glycero-3-phosphocholine + H2O = a 1-O-alkyl-sn-glycero-3-phosphocholine + acetate + H(+). It carries out the reaction 1-hexadecanoyl-sn-glycero-3-phosphocholine + H2O = sn-glycerol 3-phosphocholine + hexadecanoate + H(+). The catalysed reaction is 2 1-hexadecanoyl-sn-glycero-3-phosphocholine = 1,2-dihexadecanoyl-sn-glycero-3-phosphocholine + sn-glycerol 3-phosphocholine. The enzyme catalyses 1-octadecanoyl-sn-glycero-3-phosphocholine + H2O = octadecanoate + sn-glycerol 3-phosphocholine + H(+). It catalyses the reaction 1-(9Z-octadecenoyl)-sn-glycero-3-phosphocholine + H2O = sn-glycerol 3-phosphocholine + (9Z)-octadecenoate + H(+). It carries out the reaction 1-hexadecanoyl-sn-glycero-3-phosphoethanolamine + H2O = sn-glycero-3-phosphoethanolamine + hexadecanoate + H(+). The catalysed reaction is 1-(9Z-octadecenoyl)-sn-glycero-3-phosphoethanolamine + H2O = sn-glycero-3-phosphoethanolamine + (9Z)-octadecenoate + H(+). The enzyme catalyses 1-hexadecanoyl-sn-glycero-3-phosphoethanolamine + 1-hexadecanoyl-sn-glycero-3-phosphocholine = 1,2-dihexadecanoyl-sn-glycero-3-phosphoethanolamine + sn-glycerol 3-phosphocholine. It catalyses the reaction 2-(5Z,8Z,11Z,14Z)-eicosatetraenoyl-sn-glycero-3-phosphocholine + H2O = sn-glycerol 3-phosphocholine + (5Z,8Z,11Z,14Z)-eicosatetraenoate + H(+). It carries out the reaction 2-hexadecanoyl-sn-glycero-3-phosphocholine + H2O = sn-glycerol 3-phosphocholine + hexadecanoate + H(+). The catalysed reaction is 2 2-hexadecanoyl-sn-glycero-3-phosphocholine = 1,2-dihexadecanoyl-sn-glycero-3-phosphocholine + sn-glycerol 3-phosphocholine. The enzyme catalyses 1-O-(9Z)-octadecenoyl-2-O-acetyl-sn-glycero-3-phosphocholine + H2O = 2-acetyl-sn-glycero-3-phosphocholine + (9Z)-octadecenoate + H(+). It catalyses the reaction a 1-acyl-sn-glycero-3-phospho-(1D-myo-inositol) + 1-hexadecanoyl-sn-glycero-3-phosphocholine = a 1-acyl-2-hexadecanoyl-sn-glycero-3-phospho-(1D-myo-inositol) + sn-glycerol 3-phosphocholine. It carries out the reaction 2 2-(5Z,8Z,11Z,14Z)-eicosatetraenoyl-sn-glycero-3-phosphocholine = 1,2-di-(5Z,8Z,11Z,14Z-eicosatetraenoyl)-sn-glycero-3-phosphocholine + sn-glycerol 3-phosphocholine. Its function is as follows. Exhibits lysophospholipase, transacylase, PAF acetylhydrolase and asparaginase activities. Can catalyze three types of transacylation reactions: (1) acyl transfer from 1-acyl-sn-glycero-3-phosphocholine (1-acyl-GPC) to the sn-1(3) positions of glycerol and 2-acylglycerol (sn-1 to -1(3) transfer), (2) acyl transfer from 1-acyl-GPC to the sn-2 positions of 1-acyl-GPC, 1-acyl-sn-glycero-3-phosphoethanolamine (1-acyl-GPE), and other lysophospholipids (sn-1 to -2 transfer) and (3) acyl transfer from 2-acyl-GPC to the sn-1 position of 2-acyl-GPC and 2-acyl-GPE (sn-2 to -1 transfer). Mediates the synthesis of 1-arachidonoyl species of phospholipids by transferring the arachidonoyl residue from 2-arachidonoyl lysophospholipid to the sn-1 position of 2-acyl lysophospholipid. This is 60 kDa lysophospholipase (ASPG) from Homo sapiens (Human).